Reading from the N-terminus, the 321-residue chain is GTP 3',8-cyclase (321 aa).

In terms of domain architecture, Radical SAM core spans 5 to 233 (SFNRVIDYIR…QGSSKIYTLE (229 aa)). Residue Arg-14 participates in GTP binding. Cys-21 and Cys-25 together coordinate [4Fe-4S] cluster. Tyr-27 provides a ligand contact to S-adenosyl-L-methionine. Cys-28 lines the [4Fe-4S] cluster pocket. Arg-64 lines the GTP pocket. Gly-68 is a binding site for S-adenosyl-L-methionine. Ser-95 provides a ligand contact to GTP. S-adenosyl-L-methionine is bound at residue Ser-119. Residue Lys-155 coordinates GTP. Met-189 lines the S-adenosyl-L-methionine pocket. 2 residues coordinate [4Fe-4S] cluster: Cys-249 and Cys-252. 254–256 (RIR) serves as a coordination point for GTP. Cys-266 serves as a coordination point for [4Fe-4S] cluster.

The protein belongs to the radical SAM superfamily. MoaA family. Monomer and homodimer. The cofactor is [4Fe-4S] cluster.

The catalysed reaction is GTP + AH2 + S-adenosyl-L-methionine = (8S)-3',8-cyclo-7,8-dihydroguanosine 5'-triphosphate + 5'-deoxyadenosine + L-methionine + A + H(+). It participates in cofactor biosynthesis; molybdopterin biosynthesis. Functionally, catalyzes the cyclization of GTP to (8S)-3',8-cyclo-7,8-dihydroguanosine 5'-triphosphate. The chain is GTP 3',8-cyclase from Helicobacter pylori (strain ATCC 700392 / 26695) (Campylobacter pylori).